Here is a 123-residue protein sequence, read N- to C-terminus: Holo-[acyl-carrier-protein] synthase (123 aa).

The Mg(2+) site is built by D8 and E56.

It belongs to the P-Pant transferase superfamily. AcpS family. Requires Mg(2+) as cofactor.

It localises to the cytoplasm. It catalyses the reaction apo-[ACP] + CoA = holo-[ACP] + adenosine 3',5'-bisphosphate + H(+). Its function is as follows. Transfers the 4'-phosphopantetheine moiety from coenzyme A to a Ser of acyl-carrier-protein. The protein is Holo-[acyl-carrier-protein] synthase of Clostridium botulinum (strain Eklund 17B / Type B).